Reading from the N-terminus, the 504-residue chain is MSEIRTRIAPSPTGDPHVGTAYIALFNLCFARQHGGKFLLRIEDTDQTRSTPESEQAILDSLRWLGLEWDEGPDVGGPHGPYRQSERMDIYGKYALELVEKGHAFYCFATAEELDEMRREQQARGETPRYDGRGLTLTSAEVQSRLDAGEPYVIRMKIPEEGVCEIDDMLRGKIEIEWSQVDMQVLLKADGMPTYHLANVVDDHLMQITHVIRGEEWINSAPKHLKLYEYFGWRAPVLCHLPLLRNPDKSKLSKRKNPTSILYYKRMGYLPEAMLNYLGRMGWSMPDEREKFTLVEMQEHFDLLRVSLGGPIFDVEKLSWLNSLWIRENFTIEQLAQRLHDWALNKDMLLQALPHAQSRMTTLSDFAPLAGFLVSGMMPVTEASFASNKLPVEQQKEFLQFALWRLEALRTWERDTLFAELKTLAEQMGLKIKDAIAPVFVAIAGSTASFPVVDSMQIIGPDMSRARIRHAINALGGFGKNKQKDLEKVFAKLSEQGEEPAVNH.

The 'HIGH' region motif lies at 10–20; that stretch reads PSPTGDPHVGT. Residues 251–255 carry the 'KMSKS' region motif; sequence KLSKR. K254 contacts ATP.

Belongs to the class-I aminoacyl-tRNA synthetase family. Glutamate--tRNA ligase type 1 subfamily. Monomer.

It is found in the cytoplasm. It catalyses the reaction tRNA(Glu) + L-glutamate + ATP = L-glutamyl-tRNA(Glu) + AMP + diphosphate. Catalyzes the attachment of glutamate to tRNA(Glu) in a two-step reaction: glutamate is first activated by ATP to form Glu-AMP and then transferred to the acceptor end of tRNA(Glu). This chain is Glutamate--tRNA ligase, found in Cellvibrio japonicus (strain Ueda107) (Pseudomonas fluorescens subsp. cellulosa).